Consider the following 534-residue polypeptide: Sodium-dependent lysophosphatidylcholine symporter 1 (534 aa).

Topologically, residues 1 to 39 (MAKGEGAESGSAAGLLPTSILQASERPVQVKKEPKKKQQ) are cytoplasmic. A helical transmembrane segment spans residues 40-69 (LSICNKLCYAVGGAPYQLTGCALGFFLQIY). The Extracellular segment spans residues 70–80 (LLDVAKVEPLP). A helical transmembrane segment spans residues 81 to 101 (ASIILFVGRAWDAFTDPLVGF). At 102–113 (CISKSSWTRLGR) the chain is on the cytoplasmic side. A helical membrane pass occupies residues 114 to 133 (LMPWIIFSTPLAIIAYFLIW). At 134 to 148 (FVPDFPSGTESSHGF) the chain is on the extracellular side. Residues 149–173 (LWYLLFYCLFETLVTCFHVPYSALT) traverse the membrane as a helical segment. The Cytoplasmic portion of the chain corresponds to 174 to 180 (MFISTEQ). A helical membrane pass occupies residues 181–212 (SERDSATAYRMTVEVLGTVIGTAIQGQIVGQA). Residues 213 to 232 (KAPCLQDQNGSVVVSEVANR) are Extracellular-facing. A disulfide bond links Cys216 and Cys464. N-linked (GlcNAc...) asparagine glycans are attached at residues Asn221 and Asn231. Residues 233–266 (TQSTASLKDTQNAYLLAAGIIASIYVLCAFILIL) form a helical membrane-spanning segment. The Cytoplasmic portion of the chain corresponds to 267 to 297 (GVREQRELYESQQAESMPFFQGLRLVMGHGP). Residues 298 to 324 (YVKLIAGFLFTSLAFMLVEGNFALFCT) traverse the membrane as a helical segment. The Extracellular segment spans residues 325-335 (YTLDFRNEFQN). A helical membrane pass occupies residues 336–354 (LLLAIMLSATFTIPIWQWF). The Cytoplasmic segment spans residues 355-358 (LTRF). The chain crosses the membrane as a helical span at residues 359–380 (GKKTAVYIGISSAVPFLILVAL). Topologically, residues 381 to 383 (MER) are extracellular. A helical membrane pass occupies residues 384 to 420 (NLIVTYVVAVAAGVSVAAAFLLPWSMLPDVIDDFHLK). The Cytoplasmic segment spans residues 421–430 (HPHSPGTEPI). A helical membrane pass occupies residues 431-457 (FFSFYVFFTKFASGVSLGVSTLSLDFA). The Extracellular segment spans residues 458–469 (NYQRQGCSQPEQ). The helical transmembrane segment at 470 to 493 (VKFTLKMLVTMAPIILILLGLLLF) threads the bilayer. The Cytoplasmic portion of the chain corresponds to 494–534 (KLYPIDEEKRRQNKKALQALREEASSSGCSDTDSTELASIL).

The protein belongs to the major facilitator superfamily. N-glycosylated. In terms of tissue distribution, widely expressed. Exhibits an oscillatory pattern of expression in brown adipose tissue and liver consistent with a circadian rhythm. Enriched in brain micro-vessels, where it is specifically present in endothelium constituting the blood-brain barrier (at protein level).

The protein resides in the cell membrane. It localises to the endoplasmic reticulum membrane. It catalyses the reaction a 1-acyl-sn-glycero-3-phosphocholine(in) + Na(+)(in) = a 1-acyl-sn-glycero-3-phosphocholine(out) + Na(+)(out). It carries out the reaction 1-(4Z,7Z,10Z,13Z,16Z,19Z-docosahexaenoyl)-sn-glycero-3-phosphocholine(in) + Na(+)(in) = 1-(4Z,7Z,10Z,13Z,16Z,19Z-docosahexaenoyl)-sn-glycero-3-phosphocholine(out) + Na(+)(out). The catalysed reaction is 1-(9Z-octadecenoyl)-sn-glycero-3-phosphocholine(in) + Na(+)(in) = 1-(9Z-octadecenoyl)-sn-glycero-3-phosphocholine(out) + Na(+)(out). The enzyme catalyses 1-hexadecanoyl-sn-glycero-3-phosphocholine(in) + Na(+)(in) = 1-hexadecanoyl-sn-glycero-3-phosphocholine(out) + Na(+)(out). It catalyses the reaction a 1-acyl-sn-glycero-3-phosphoethanolamine(in) + Na(+)(in) = a 1-acyl-sn-glycero-3-phosphoethanolamine(out) + Na(+)(out). Sodium-dependent lysophosphatidylcholine (LPC) symporter, which plays an essential role for blood-brain barrier formation and function. Specifically expressed in endothelium of the blood-brain barrier of micro-vessels and transports LPC into the brain. Transport of LPC is essential because it constitutes the major mechanism by which docosahexaenoic acid (DHA), an omega-3 fatty acid that is essential for normal brain growth and cognitive function, enters the brain. Transports LPC carrying long-chain fatty acids such LPC oleate and LPC palmitate with a minimum acyl chain length of 14 carbons. Does not transport docosahexaenoic acid in unesterified fatty acid. Not required for central nervous system vascular morphogenesis. The polypeptide is Sodium-dependent lysophosphatidylcholine symporter 1 (Mus musculus (Mouse)).